The primary structure comprises 199 residues: FMN-dependent NADH:quinone oxidoreductase (199 aa).

Residue 17 to 19 (SYS) coordinates FMN.

Belongs to the azoreductase type 1 family. In terms of assembly, homodimer. The cofactor is FMN.

The enzyme catalyses 2 a quinone + NADH + H(+) = 2 a 1,4-benzosemiquinone + NAD(+). It carries out the reaction N,N-dimethyl-1,4-phenylenediamine + anthranilate + 2 NAD(+) = 2-(4-dimethylaminophenyl)diazenylbenzoate + 2 NADH + 2 H(+). In terms of biological role, quinone reductase that provides resistance to thiol-specific stress caused by electrophilic quinones. Also exhibits azoreductase activity. Catalyzes the reductive cleavage of the azo bond in aromatic azo compounds to the corresponding amines. The sequence is that of FMN-dependent NADH:quinone oxidoreductase from Mycoplasmopsis synoviae (strain 53) (Mycoplasma synoviae).